A 290-amino-acid chain; its full sequence is Phosphoribosylaminoimidazole-succinocarboxamide synthase (290 aa).

The protein belongs to the SAICAR synthetase family.

The catalysed reaction is 5-amino-1-(5-phospho-D-ribosyl)imidazole-4-carboxylate + L-aspartate + ATP = (2S)-2-[5-amino-1-(5-phospho-beta-D-ribosyl)imidazole-4-carboxamido]succinate + ADP + phosphate + 2 H(+). Its pathway is purine metabolism; IMP biosynthesis via de novo pathway; 5-amino-1-(5-phospho-D-ribosyl)imidazole-4-carboxamide from 5-amino-1-(5-phospho-D-ribosyl)imidazole-4-carboxylate: step 1/2. The sequence is that of Phosphoribosylaminoimidazole-succinocarboxamide synthase (purC) from Haemophilus influenzae (strain ATCC 51907 / DSM 11121 / KW20 / Rd).